The following is a 1007-amino-acid chain: MEVFPLLFFLSFWWSRTWDLATSDSIIHIGAIFDESAKKDDEVFRTAVGDLNQNEEILQTEKITFSVTFVDGNNPFQAVQEACELMNQGILALVSSIGCTSAGSLQSLADAMHIPHLFIQRSTAGTPRSGCGLTRSNRNDDYTLSVRPPVYLNEVILRVVTEYAWQKFIIFYDSEYDIRGIQEFLDKVSQQGMDVALQKVENNINKMITTLFDTMRIEELNRYRDTLRRAILVMNPATAKSFISEVVETNLVAFDCHWIIINEEINDVDVQELVRRSIGRLTIIRQTFPVPQNISQRCFRGNHRISSTLCDPKDPFAQNMEISNLYIYDTVLLLANAFHKKLEDRKWHSMASLSCIRKNSKPWQGGRSMLETIKKGGVNGLTGDLEFGENGGNPNVHFEILGTNYGEELGRGVRKLGCWNPVTGLNGSLTDKKLENNMRGVVLRVVTVLEEPFVMVSENVLGKPKKYQGFSIDVLDALSNYLGFNYEIYVAPDHKYGSPQEDGTWNGLVGELVFKRADIGISALTITPDRENVVDFTTRYMDYSVGVLLRRAEKTVDMFACLAPFDLSLWACIAGTVLLVGLLVYLLNWLNPPRLQMGSMTSTTLYNSMWFVYGSFVQQGGEVPYTTLATRMMMGAWWLFALIVISSYTANLAAFLTITRIESSIQSLQDLSKQTDIPYGTVLDSAVYQHVRMKGLNPFERDSMYSQMWRMINRSNGSENNVLESQAGIQKVKYGNYAFVWDAAVLEYVAINDPDCSFYTVGNTVADRGYGIALQHGSPYRDVFSQRILELQQSGDMDILKHKWWPKNGQCDLYSSVDAKQKGGALDIKSLAGVFCILAAGIVLSCLIAVLETWWSRRKGSRVPSKEDDKEIDLEHLHRRVNSLCTDDDSPHKQFSTSSIDLTPLDIDTLPTRQALEQISDFRNTHITTTTFIPEQIQTLSRTLSAKAASGFTFGSVPEHRTGPFRHRAPNGGFFRSPIKTMSSIPYQPTPTLGLNLGNDPDRGTSI.

The first 23 residues, 1–23, serve as a signal peptide directing secretion; that stretch reads MEVFPLLFFLSFWWSRTWDLATS. The interval 24–345 is interaction with CBLN1 homotrimer; that stretch reads DSIIHIGAIF…NAFHKKLEDR (322 aa). At 24–566 the chain is on the extracellular side; the sequence is DSIIHIGAIF…DMFACLAPFD (543 aa). Disulfide bonds link cysteine 83/cysteine 355, cysteine 99/cysteine 131, and cysteine 298/cysteine 310. Asparagine 293 is a glycosylation site (N-linked (GlcNAc...) asparagine). Asparagine 426 carries an N-linked (GlcNAc...) asparagine glycan. The chain crosses the membrane as a helical span at residues 567–587; sequence LSLWACIAGTVLLVGLLVYLL. The Cytoplasmic portion of the chain corresponds to 588-635; it reads NWLNPPRLQMGSMTSTTLYNSMWFVYGSFVQQGGEVPYTTLATRMMMG. A helical membrane pass occupies residues 636 to 656; that stretch reads AWWLFALIVISSYTANLAAFL. Topologically, residues 657-830 are extracellular; that stretch reads TITRIESSIQ…QKGGALDIKS (174 aa). Asparagine 713 and asparagine 716 each carry an N-linked (GlcNAc...) asparagine glycan. A helical transmembrane segment spans residues 831-851; the sequence is LAGVFCILAAGIVLSCLIAVL. The Cytoplasmic portion of the chain corresponds to 852–1007; that stretch reads ETWWSRRKGS…GNDPDRGTSI (156 aa). At serine 883 the chain carries Phosphoserine. Residue threonine 886 is modified to Phosphothreonine. Serine 890 is modified (phosphoserine). An interaction with AP4M1 region spans residues 921–991; it reads DFRNTHITTT…MSSIPYQPTP (71 aa). The PDZ-binding signature appears at 1005–1007; sequence TSI. Residue serine 1006 is modified to Phosphoserine.

It belongs to the glutamate-gated ion channel (TC 1.A.10.1) family. GRID2 subfamily. As to quaternary structure, tetramer; dimer of dimers. Interacts with AP4M1. Interacts with EML2. Interacts with MAGI2 (via PDZ domains). Interacts with BECN1, GOPC, GRID2IP, SHANK1 and SHANK2. Interacts with CBLN2, but not with CBLN4. Interacts with CBLN1 (via C1q domain); the interaction is CBLN1-NRX1 complex formation-dependent; CBLN1-binding is calcium-independent; CBLN1 hexamers anchor GRID2 N-terminal domain dimers to monomeric NRXN1 isoform beta; promotes synaptogenesis and mediates the D-Serine-dependent long term depression signals and AMPA receptor endocytosis. In terms of tissue distribution, expressed at high levels in the cerebellar Purkinje cell layer, almost absent in the forebrain.

The protein localises to the postsynaptic cell membrane. It carries out the reaction Ca(2+)(in) = Ca(2+)(out). It catalyses the reaction Na(+)(in) = Na(+)(out). Functionally, member of the ionotropic glutamate receptor family, which plays a crucial role in synaptic organization and signal transduction in the central nervous system. Although it shares structural features with ionotropic glutamate receptors, does not bind glutamate as a primary ligand. Promotes synaptogenesis and mediates the D-Serine-dependent long term depression signals and AMPA receptor endocytosis of cerebellar parallel fiber-Purkinje cell (PF-PC) synapses through the NRX1B-CBLN1-GRID2 triad complex. In the presence of neurexins and cerebellins, forms cation-selective channels that are proposed to be gated by glycine and D-serine. However, recent research disputes this ligand-gated cation channel activity. Cation-selective ion channel activity can be triggered by GRM1 in Purkinje cells. The chain is Glutamate receptor ionotropic, delta-2 (Grid2) from Rattus norvegicus (Rat).